Here is a 59-residue protein sequence, read N- to C-terminus: Large ribosomal subunit protein uL30 (59 aa).

It belongs to the universal ribosomal protein uL30 family. In terms of assembly, part of the 50S ribosomal subunit.

The polypeptide is Large ribosomal subunit protein uL30 (Geotalea daltonii (strain DSM 22248 / JCM 15807 / FRC-32) (Geobacter daltonii)).